The primary structure comprises 377 residues: N-acetylgalactosamine-6-phosphate deacetylase (377 aa).

Glutamate 125 serves as a coordination point for a divalent metal cation. Residue 136 to 137 (AH) coordinates substrate. Positions 191 and 212 each coordinate a divalent metal cation. Substrate is bound by residues 215–216 (NG), arginine 223, and 244–247 (DGHH). Residue aspartate 269 is the Proton donor/acceptor of the active site. Residue 302–304 (LAG) participates in substrate binding.

This sequence belongs to the metallo-dependent hydrolases superfamily. NagA family. It depends on a divalent metal cation as a cofactor.

The enzyme catalyses N-acetyl-D-galactosamine 6-phosphate + H2O = D-galactosamine 6-phosphate + acetate. In terms of biological role, catalyzes the deacetylation of N-acetyl-D-galactosamine 6-phosphate to D-galactosamine 6-phosphate. Can probably also catalyze the deacetylation of N-acetyl-D-glucosamine 6-phosphate to D-glucosamine 6-phosphate. The protein is N-acetylgalactosamine-6-phosphate deacetylase (agaA) of Escherichia coli O157:H7.